We begin with the raw amino-acid sequence, 414 residues long: Arrestin domain-containing protein 3 (414 aa).

2 consecutive short sequence motifs (PPxY motif) follow at residues Pro-346 to Tyr-349 and Pro-391 to Tyr-394. A disordered region spans residues Leu-393–Arg-414. Positions Ala-405–Arg-414 are enriched in basic and acidic residues.

The protein belongs to the arrestin family. Interacts (via PPxY motifs) with NEDD4 (via WW domains). Interacts with ADRB2. Interacts with ADRB3. Interacts with HGS (via PPxY motifs). Does not bind TXN (thioredoxin). Interacts with ITCH. Interacts with WWP1 (via WW domains). As to expression, highly expressed in skeletal muscle, placenta, kidney, lung, liver, blood, adrenal gland, lymph node, mammary gland, thyroid, and trachea. Very low levels in colon, thymus, spleen, small intestine, bladder and bone marrow. Strong expression in differentiated adipocytes compared to preadipocytes. Detected in omental fat and subcutaneous fat tissue.

The protein localises to the cytoplasm. It is found in the cell membrane. Its subcellular location is the lysosome. It localises to the endosome. The protein resides in the early endosome. Functionally, adapter protein that plays a role in regulating cell-surface expression of adrenergic receptors and probably also other G protein-coupled receptors. Plays a role in NEDD4-mediated ubiquitination and endocytosis af activated ADRB2 and subsequent ADRB2 degradation. May recruit NEDD4 to ADRB2. Alternatively, may function as adapter protein that does not play a major role in recruiting NEDD4 to ADRB2, but rather plays a role in a targeting ADRB2 to endosomes. The protein is Arrestin domain-containing protein 3 (ARRDC3) of Homo sapiens (Human).